A 416-amino-acid polypeptide reads, in one-letter code: Probable glucan 1,3-beta-glucosidase A (416 aa).

The signal sequence occupies residues 1 to 22 (MIFKFSQKALVALYLVVGLAEA). Glu-211 serves as the catalytic Proton donor. Disulfide bonds link Cys-291-Cys-415 and Cys-316-Cys-342. Residue Glu-308 is the Nucleophile of the active site. An N-linked (GlcNAc...) asparagine glycan is attached at Asn-344.

Belongs to the glycosyl hydrolase 5 (cellulase A) family. Monomer. The cofactor is Mn(2+).

It localises to the secreted. It carries out the reaction Successive hydrolysis of beta-D-glucose units from the non-reducing ends of (1-&gt;3)-beta-D-glucans, releasing alpha-glucose.. Functionally, beta-glucanases participate in the metabolism of beta-glucan, the main structural component of the cell wall. It could also function biosynthetically as a transglycosylase. This chain is Probable glucan 1,3-beta-glucosidase A (exgA), found in Aspergillus fumigatus (strain CBS 144.89 / FGSC A1163 / CEA10) (Neosartorya fumigata).